We begin with the raw amino-acid sequence, 211 residues long: FMN-dependent NADH:quinone oxidoreductase (211 aa).

FMN is bound by residues serine 10 and 16 to 18; that span reads STS.

The protein belongs to the azoreductase type 1 family. As to quaternary structure, homodimer. FMN serves as cofactor.

It catalyses the reaction 2 a quinone + NADH + H(+) = 2 a 1,4-benzosemiquinone + NAD(+). The catalysed reaction is N,N-dimethyl-1,4-phenylenediamine + anthranilate + 2 NAD(+) = 2-(4-dimethylaminophenyl)diazenylbenzoate + 2 NADH + 2 H(+). In terms of biological role, quinone reductase that provides resistance to thiol-specific stress caused by electrophilic quinones. Also exhibits azoreductase activity. Catalyzes the reductive cleavage of the azo bond in aromatic azo compounds to the corresponding amines. The polypeptide is FMN-dependent NADH:quinone oxidoreductase (Frankia casuarinae (strain DSM 45818 / CECT 9043 / HFP020203 / CcI3)).